The following is a 132-amino-acid chain: Small ribosomal subunit protein uS8c (132 aa).

The protein belongs to the universal ribosomal protein uS8 family. Part of the 30S ribosomal subunit.

The protein resides in the plastid. Its subcellular location is the chloroplast. Its function is as follows. One of the primary rRNA binding proteins, it binds directly to 16S rRNA central domain where it helps coordinate assembly of the platform of the 30S subunit. This is Small ribosomal subunit protein uS8c (rps8) from Gracilaria tenuistipitata var. liui (Red alga).